Reading from the N-terminus, the 77-residue chain is uncharacterized protein (77 aa).

Positions 13-67 (VLQYMVNNDYSLNQLALEIGVSPATLSRVLNGERRPGQLVIGKMLHYFNLKFEDL) constitute an HTH cro/C1-type domain. Residues 24-43 (LNQLALEIGVSPATLSRVLN) constitute a DNA-binding region (H-T-H motif).

The protein resides in the cytoplasm. This is an uncharacterized protein from Bacillus subtilis (strain 168).